The chain runs to 359 residues: Cytochrome c oxidase subunit 2 (359 aa).

A signal peptide spans 1 to 28 (MEQQNKRGLKRKALLGGVLGSGGLAMAG). Cys29 is lipidated: N-palmitoyl cysteine. Cys29 carries the S-diacylglycerol cysteine lipid modification. The next 2 membrane-spanning stretches (helical) occupy residues 64-84 (VWVA…TAIF) and 107-127 (VPLE…LFFF). Residues His244, Cys285, Glu287, Cys289, His293, and Met296 each coordinate Cu cation. The tract at residues 338–359 (STAPFVSDRTGTRDGENFQTPA) is disordered.

Belongs to the cytochrome c oxidase subunit 2 family. In terms of assembly, associates with subunits I, III and IV to form cytochrome c oxidase. Requires binuclear copper center (CuA) as cofactor.

It localises to the cell membrane. The catalysed reaction is 4 Fe(II)-[cytochrome c] + O2 + 8 H(+)(in) = 4 Fe(III)-[cytochrome c] + 2 H2O + 4 H(+)(out). In terms of biological role, subunits I and II form the functional core of the enzyme complex. Electrons originating in cytochrome c are transferred via heme a and Cu(A) to the binuclear center formed by heme a3 and Cu(B). The sequence is that of Cytochrome c oxidase subunit 2 (ctaC) from Corynebacterium efficiens (strain DSM 44549 / YS-314 / AJ 12310 / JCM 11189 / NBRC 100395).